The sequence spans 1148 residues: Putative transcription factor SEF1 (1148 aa).

Residues 1–51 are disordered; that stretch reads MVKDNRDSDQDQDFSSAHMKRQPEQQQLQQHQFPSKKQRISHHDDSHQINH. A Phosphoserine modification is found at S8. Positions 57 to 87 form a DNA-binding region, zn(2)-C6 fungal-type; the sequence is CTHCRQHKIKCDASQNFPHPCSRCEKIGLHC. Residues 148–180 form a disordered region; that stretch reads PTPGTIIPNPDSSPSSGSPTSSAAQRDSKVSVQ. Residues 150-169 are compositionally biased toward low complexity; the sequence is PGTIIPNPDSSPSSGSPTSS. A Phosphoserine modification is found at S263. The tract at residues 524 to 550 is disordered; that stretch reads EESEEDNNDSIDNNNNDKRNKKDEPHV. A compositionally biased stretch (basic and acidic residues) spans 538–550; sequence NNDKRNKKDEPHV. S806 is subject to Phosphoserine. The span at 1029 to 1050 shows a compositional bias: polar residues; that stretch reads RSQSSMSHSRTPIASKSNNMTD. The tract at residues 1029 to 1063 is disordered; the sequence is RSQSSMSHSRTPIASKSNNMTDLHSVVSDPGSSKS.

The protein localises to the nucleus. Functionally, putative transcription factor that seems to be involved in the sporulation process. Suppresses the lethal phenotype of RPM2 deletion. The sequence is that of Putative transcription factor SEF1 (SEF1) from Saccharomyces cerevisiae (strain ATCC 204508 / S288c) (Baker's yeast).